The sequence spans 166 residues: Small ribosomal subunit protein uS5 (166 aa).

The S5 DRBM domain maps to leucine 11–valine 74.

It belongs to the universal ribosomal protein uS5 family. As to quaternary structure, part of the 30S ribosomal subunit. Contacts proteins S4 and S8.

Functionally, with S4 and S12 plays an important role in translational accuracy. In terms of biological role, located at the back of the 30S subunit body where it stabilizes the conformation of the head with respect to the body. The chain is Small ribosomal subunit protein uS5 from Actinobacillus succinogenes (strain ATCC 55618 / DSM 22257 / CCUG 43843 / 130Z).